We begin with the raw amino-acid sequence, 155 residues long: Arginine repressor (155 aa).

Belongs to the ArgR family.

Its subcellular location is the cytoplasm. It functions in the pathway amino-acid biosynthesis; L-arginine biosynthesis [regulation]. Functionally, regulates arginine biosynthesis genes. The sequence is that of Arginine repressor from Histophilus somni (strain 129Pt) (Haemophilus somnus).